Reading from the N-terminus, the 29-residue chain is Putative membrane protein PmrR (29 aa).

Residues 5–27 (VYESLTTVFSVLVVSSFLYIWFA) traverse the membrane as a helical segment.

Its subcellular location is the cell inner membrane. Its function is as follows. May bind to BasS and modulate its sensor kinase activity. This Escherichia coli (strain K12) protein is Putative membrane protein PmrR (pmrR).